Reading from the N-terminus, the 499-residue chain is Glycerol kinase (499 aa).

An ADP-binding site is contributed by T13. ATP contacts are provided by T13, T14, and S15. T13 contributes to the sn-glycerol 3-phosphate binding site. ADP is bound at residue R17. R83, E84, Y135, and D244 together coordinate sn-glycerol 3-phosphate. Residues R83, E84, Y135, D244, and Q245 each coordinate glycerol. ADP is bound by residues T266 and G309. T266, G309, Q313, and G410 together coordinate ATP. Residues G410 and N414 each contribute to the ADP site.

Belongs to the FGGY kinase family.

The enzyme catalyses glycerol + ATP = sn-glycerol 3-phosphate + ADP + H(+). It participates in polyol metabolism; glycerol degradation via glycerol kinase pathway; sn-glycerol 3-phosphate from glycerol: step 1/1. With respect to regulation, inhibited by fructose 1,6-bisphosphate (FBP). Its function is as follows. Key enzyme in the regulation of glycerol uptake and metabolism. Catalyzes the phosphorylation of glycerol to yield sn-glycerol 3-phosphate. In Paraburkholderia xenovorans (strain LB400), this protein is Glycerol kinase.